Here is a 478-residue protein sequence, read N- to C-terminus: MIKKIPMIIGGVVQNTSGYGMRELTLNNNKVNIPIITQSDVEAIQSLNIENKLTINQIVNFLYTVGQKWKSETYSRRLTYIRDLIKFLGYSQEMAKLEANWISMILCSKSALYDIVENDLSSRHIIDEWIPQGECYVKALPKGKSVHLLAGNVPLSGVTSILRAILTKNECIIKTSSADPFTATALVNSFIDVDAEHPITRSISVMYWSHSEDLAIPKQIMSCADVVIAWGGDDAIKWATEHAPSHADILKFGPKKSISIVDNPTDIKAAAIGVAHDICFYDQQACFSTQDIYYIGDSIDIFFDELAQQLNKYKDILPKGERNFDEKAAFSLTERECLFAKYKVQKGESQSWLLTQSPAGSFGNQPLSRSAYIHQVNDISEVIPFVHKAVTQTVAIAPWESSFKYRDILAEHGAERIIEAGMNNIFRVGGAHDGMRPLQRLVNYISHERPSTYTTKDVSVKIEQTRYLEEDKFLVFVP.

It belongs to the LuxC family.

The catalysed reaction is a long-chain fatty aldehyde + NADP(+) + CoA = a long-chain fatty acyl-CoA + NADPH + H(+). It participates in lipid metabolism; fatty acid reduction for biolumincescence. LuxC is the fatty acid reductase enzyme responsible for synthesis of the aldehyde substrate for the luminescent reaction catalyzed by luciferase. This is Long-chain acyl-protein thioester reductase 2 (luxC) from Photobacterium leiognathi.